The chain runs to 242 residues: NH(3)-dependent NAD(+) synthetase (242 aa).

27 to 34 (GISGGIDS) contributes to the ATP binding site. Aspartate 33 serves as a coordination point for Mg(2+). Arginine 109 serves as a coordination point for deamido-NAD(+). Threonine 129 provides a ligand contact to ATP. A Mg(2+)-binding site is contributed by glutamate 134. Residues lysine 142 and aspartate 149 each coordinate deamido-NAD(+). 2 residues coordinate ATP: lysine 158 and threonine 180. 231–232 (HK) is a binding site for deamido-NAD(+).

Belongs to the NAD synthetase family. As to quaternary structure, homodimer.

The catalysed reaction is deamido-NAD(+) + NH4(+) + ATP = AMP + diphosphate + NAD(+) + H(+). Its pathway is cofactor biosynthesis; NAD(+) biosynthesis; NAD(+) from deamido-NAD(+) (ammonia route): step 1/1. Catalyzes the ATP-dependent amidation of deamido-NAD to form NAD. Uses ammonia as a nitrogen source. The protein is NH(3)-dependent NAD(+) synthetase of Thermoplasma volcanium (strain ATCC 51530 / DSM 4299 / JCM 9571 / NBRC 15438 / GSS1).